Consider the following 128-residue polypeptide: Protein Wnt-8 (128 aa).

A lipid anchor (O-palmitoleoyl serine) is attached at serine 1. 2 cysteine pairs are disulfide-bonded: cysteine 71–cysteine 109 and cysteine 87–cysteine 102. Asparagine 74 and asparagine 93 each carry an N-linked (GlcNAc...) asparagine glycan.

The protein belongs to the Wnt family. Post-translationally, palmitoleoylation is required for efficient binding to frizzled receptors. Depalmitoleoylation leads to Wnt signaling pathway inhibition. Proteolytic processing by tiki1 and tiki2 promotes oxidation and formation of large disulfide-bond oligomers, leading to inactivation of wnt8.

The protein localises to the secreted. It localises to the extracellular space. The protein resides in the extracellular matrix. Its function is as follows. Ligand for members of the frizzled family of seven transmembrane receptors. Probable developmental protein. May be a signaling molecule which affects the development of discrete regions of tissues. Is likely to signal over only few cell diameters. This is Protein Wnt-8 (wnt8) from Thunnus thynnus (Atlantic bluefin tuna).